Here is a 1277-residue protein sequence, read N- to C-terminus: NPC intracellular cholesterol transporter 1 (1277 aa).

An N-terminal signal peptide occupies residues 1–22 (MGAHHPALGLLLLLLCPAQVFS). Over 23–269 (QSCVWYGECG…WRIWGLDAMY (247 aa)) the chain is Lumenal. Disulfide bonds link cysteine 25-cysteine 74, cysteine 31-cysteine 42, cysteine 63-cysteine 109, cysteine 75-cysteine 113, cysteine 97-cysteine 238, cysteine 100-cysteine 160, cysteine 177-cysteine 184, cysteine 227-cysteine 243, and cysteine 240-cysteine 247. Asparagine 41 contacts cholesterol. Residue asparagine 70 is glycosylated (N-linked (GlcNAc...) asparagine). Glutamine 79 is a cholesterol binding site. 2 N-linked (GlcNAc...) asparagine glycosylation sites follow: asparagine 122 and asparagine 137. Positions 175 to 205 (LLCGRDARACNATNWIEYMFNKDNGQAPFTI) are important for cholesterol binding and cholesterol transfer from NPC1 to liposomes. N-linked (GlcNAc...) asparagine glycans are attached at residues asparagine 185, asparagine 222, and asparagine 228. The chain crosses the membrane as a helical span at residues 270 to 290 (VIMWVTYVAFLFVFFGALLAV). Residues 291 to 350 (WCHRRRYFVSEYTPIDSNIAFSVNSSDKGEASCCDPLGAAFDDCLRRMFTKWGAFCVRNP) lie on the Cytoplasmic side of the membrane. A helical membrane pass occupies residues 351-371 (TCIIFFSLAFITVCSSGLVFV). The Lumenal segment spans residues 372 to 621 (QVTTNPVELW…ELNRESNSDV (250 aa)). Residues asparagine 414, asparagine 459, asparagine 478, and asparagine 524 are each glycosylated (N-linked (GlcNAc...) asparagine). 2 cysteine pairs are disulfide-bonded: cysteine 468/cysteine 479 and cysteine 516/cysteine 533. An SSD domain is found at 620–785 (DVFTVIISYV…ITCFVSLLGL (166 aa)). The chain crosses the membrane as a helical span at residues 622 to 642 (FTVIISYVVMFLYISLALGHI). The Cytoplasmic portion of the chain corresponds to 643–653 (QSCSRLLVDSK). The chain crosses the membrane as a helical span at residues 654 to 674 (ISLGIAGILIVLSSVACSLGI). Over 675–683 (FSYMGMPLT) the chain is Lumenal. The chain crosses the membrane as a helical span at residues 684 to 704 (LIVIEVIPFLVLAVGVDNIFI). Topologically, residues 705–730 (LVQTYQRDERLQEETLDQQLGRILGE) are cytoplasmic. Residues 731-751 (VAPTMFLSSFSETSAFFFGAL) form a helical membrane-spanning segment. At 752 to 759 (SSMPAVHT) the chain is on the lumenal side. A helical transmembrane segment spans residues 760–780 (FSLFAGMAVLIDFLLQITCFV). Residues 781–832 (SLLGLDIKRQEKNHLDILCCVRGADDGQGSHASESYLFRFFKNYFAPLLLKD) are Cytoplasmic-facing. The helical transmembrane segment at 833–853 (WLRPIVVAVFVGVLSFSVAVV) threads the bilayer. The Lumenal segment spans residues 854-1097 (NKVDIGLDQS…EQYLTIIDDT (244 aa)). N-linked (GlcNAc...) asparagine glycosylation is found at asparagine 868 and asparagine 898. Cysteine 909 and cysteine 914 are disulfide-bonded. 4 N-linked (GlcNAc...) asparagine glycosylation sites follow: asparagine 916, asparagine 961, asparagine 968, and asparagine 1063. Disulfide bonds link cysteine 956/cysteine 1011, cysteine 957/cysteine 979, and cysteine 967/cysteine 976. A helical transmembrane segment spans residues 1098–1118 (IFNLSVSLGSIFLVTLVVLGC). The Cytoplasmic portion of the chain corresponds to 1119–1123 (ELWSA). Residues 1124–1144 (VIMCITIAMILVNMFGVMWLW) form a helical membrane-spanning segment. Glycine 1145 is a topological domain (lumenal). A helical transmembrane segment spans residues 1146–1166 (ISLNAVSLVNLVMSCGISVEF). The Cytoplasmic portion of the chain corresponds to 1167–1194 (CSHITRAFTMSTKGSRVSRAEEALAHMG). A helical membrane pass occupies residues 1195–1215 (SSVFSGITLTKFGGIVVLAFA). Over 1216-1226 (KSQIFEIFYFR) the chain is Lumenal. A helical membrane pass occupies residues 1227 to 1247 (MYLAMVLLGATHGLIFLPVLL). The Cytoplasmic segment spans residues 1248 to 1277 (SYIGPSVNKAKRHTTYERYRGTERERLLNF). The required for location in lysosomes stretch occupies residues 1274–1277 (LLNF). Positions 1274–1277 (LLNF) match the Di-leucine motif motif.

The protein belongs to the patched family. Interacts (via the second lumenal domain) with NPC2. Interacts with TMEM97; the interaction may decrease NPC1 availability to the cell. Interacts with TIM1. Interacts with SLC38A9; this interaction inhibits cholesterol-mediated mTORC1 activation via its sterol transport activity. Post-translationally, N-glycosylated. In terms of tissue distribution, detected in liver (at protein level). Ubiquitous. Detected in adult heart, spleen, lung, liver, skeletal muscle, kidney, testis.

Its subcellular location is the late endosome membrane. It is found in the lysosome membrane. The catalysed reaction is cholesterol(in) = cholesterol(out). Functionally, intracellular cholesterol transporter which acts in concert with NPC2 and plays an important role in the egress of cholesterol from the endosomal/lysosomal compartment. Unesterified cholesterol that has been released from LDLs in the lumen of the late endosomes/lysosomes is transferred by NPC2 to the cholesterol-binding pocket in the N-terminal domain of NPC1. Cholesterol binds to NPC1 with the hydroxyl group buried in the binding pocket. May play a role in vesicular trafficking in glia, a process that may be crucial for maintaining the structural and functional integrity of nerve terminals. Inhibits cholesterol-mediated mTORC1 activation throught its interaction with SLC38A9. The polypeptide is NPC intracellular cholesterol transporter 1 (Mus musculus (Mouse)).